We begin with the raw amino-acid sequence, 416 residues long: Zinc finger protein 92 homolog (416 aa).

One can recognise a KRAB domain in the interval 14–85 (VSFEDVSVYF…DIPRTWATAG (72 aa)). Residues 86-125 (LHIGDRTQSKTSTSTQKHSGRQLPGADPQGGKEGQAARSS) form a disordered region. C2H2-type zinc fingers lie at residues 152–174 (YLCQQCGKAFSRSSNLIKHRIIH), 180–202 (YACPECGKLFRRSFALLEHQRIH), 208–230 (YACPECSKTFTRSSNLIKHQVIH), 236–258 (FACGDCGKLFRRSFALLEHARVH), 264–286 (YACPECGKAFSRSSNLIEHQRTH), 292–314 (YACGQCAKAFKGVSQLIHHQRSH), 320–342 (FACRECGKAFRGRSGLSQHRRVH), and 348–370 (YECSDCGKAFGRRANLFKHQAVH). The segment at 368–416 (AVHGARRPAKAETARRLAGPGSTGPGSAVAATSPPRPSTAARPSRPSRR) is disordered. Residues 394–416 (SAVAATSPPRPSTAARPSRPSRR) show a composition bias toward low complexity.

The protein belongs to the krueppel C2H2-type zinc-finger protein family.

Its subcellular location is the nucleus. In terms of biological role, KRAB domain-containing zinc-finger protein that represses B1/Alu SINE transposable elements and modulates the transcription of nearby genes in a tissue-specific manner. It regulates glucose homeostasis and lipid metabolism by modulating the expression of the endocrine cell-defining transcription factor, MAFB, in pancreatic islets and, the fat metabolism regulator, ACACB, in adipose tissue and muscle. The protein is Zinc finger protein 92 homolog (ZFP92) of Homo sapiens (Human).